The primary structure comprises 336 residues: Dihydroorotate dehydrogenase (quinone) (336 aa).

FMN-binding positions include 62–66 and T86; that span reads AGLDK. K66 is a substrate binding site. Residue 111–115 coordinates substrate; it reads NRMGF. Residues N139 and N172 each contribute to the FMN site. N172 lines the substrate pocket. The Nucleophile role is filled by S175. Position 177 (N177) interacts with substrate. Residues K217 and T245 each coordinate FMN. Residue 246–247 participates in substrate binding; it reads NT. FMN is bound by residues G268, G297, and 318–319; that span reads YS.

The protein belongs to the dihydroorotate dehydrogenase family. Type 2 subfamily. In terms of assembly, monomer. Requires FMN as cofactor.

The protein localises to the cell membrane. The enzyme catalyses (S)-dihydroorotate + a quinone = orotate + a quinol. The protein operates within pyrimidine metabolism; UMP biosynthesis via de novo pathway; orotate from (S)-dihydroorotate (quinone route): step 1/1. Functionally, catalyzes the conversion of dihydroorotate to orotate with quinone as electron acceptor. The polypeptide is Dihydroorotate dehydrogenase (quinone) (Salmonella gallinarum (strain 287/91 / NCTC 13346)).